Here is an 885-residue protein sequence, read N- to C-terminus: MQTAEIHRRWLDFFARRGHTVVPSASLVSDDPSLLFTVAGMVPFVPYLTGIVPAPFPRATSVQKCIRTLDIEEVGKTPRHGTFFQMCGNFSFGDYFKEQAIAFAWDLLTTAETEGGLGFDPKDLWVTVYEEDDEAREIWRRVSGLAEERIQGLGKDTNYWSTGQPGPAGPCSEIFFDRGPAYGIDGGPATDDDRYVEIWNLVFMQFLRGEGTGKDDFEILGDLPKKNIDTGLGLERVAFLKQGVENMYEIDQVRPVLDRAAELAGKPYGNEAHEDDVRLRVVADHVRSALMLMTDGVTPSNEGRGYVLRRLLRRTVRAMWLLGVEAATFPALFPVSRDAMKAAYPEVETEFARTSQLAYAEEETFLRTLVAGTSILDTAVANTQKAGKRELAGDTAFLLHDTYGFPIDLTLEMAEEAGLSVDRAAFDTLMADQRARAKADAKAKKTALADLSVYSGLRALGETVFTGYTELETESSVLGLIIDGHSANKAVEGQVAEVILGATALYAEAGGQDADTGTIVGPGYVLDVLDVQKPVRGLVSHRVLVRSGEVGVGVPATSLVDADYRRGAKQAHSGTHIIHAALRQVLGSNAHQSGSYNKAGYLRLDFSWNQALSPETRSEIEEISNSAIRQNLEVTTRELPLAEAKALGAMALFGEKYGDTVRVVDIGGPWSRELCAGTHVARSAEIGLINLVSESSVGSTNRRVESLVGLEAFKDLAVERTIVSQLSSSLKTPREQLPEKIADLMASLKAAEKRIQAFEARAVLDRVQGLLEAVSRRGAVQVVAADAGTLSTADDLRLLAITVRDRLGSDPATVALAALAGGKPVVIVATNQAARDAGVTAGALAKTAAGVLGGGGGGKADLAQGGGTDATAIPAALAAVSTAIG.

Zn(2+) contacts are provided by His-572, His-576, Cys-675, and His-679.

The protein belongs to the class-II aminoacyl-tRNA synthetase family. The cofactor is Zn(2+).

Its subcellular location is the cytoplasm. It catalyses the reaction tRNA(Ala) + L-alanine + ATP = L-alanyl-tRNA(Ala) + AMP + diphosphate. In terms of biological role, catalyzes the attachment of alanine to tRNA(Ala) in a two-step reaction: alanine is first activated by ATP to form Ala-AMP and then transferred to the acceptor end of tRNA(Ala). Also edits incorrectly charged Ser-tRNA(Ala) and Gly-tRNA(Ala) via its editing domain. In Leifsonia xyli subsp. xyli (strain CTCB07), this protein is Alanine--tRNA ligase.